Reading from the N-terminus, the 207-residue chain is 8-oxoguanine DNA glycosylase/AP lyase (207 aa).

Residues Lys-129 and Asp-147 contribute to the active site.

Belongs to the type-2 OGG1 family.

The enzyme catalyses 2'-deoxyribonucleotide-(2'-deoxyribose 5'-phosphate)-2'-deoxyribonucleotide-DNA = a 3'-end 2'-deoxyribonucleotide-(2,3-dehydro-2,3-deoxyribose 5'-phosphate)-DNA + a 5'-end 5'-phospho-2'-deoxyribonucleoside-DNA + H(+). In terms of biological role, catalyzes the excision of an oxidatively damaged form of guanine (7,8-dihydro-8-oxoguanine = 8-oxoG) from DNA. Also cleaves the DNA backbone at apurinic/apyrimidinic sites (AP sites). In Thermotoga maritima (strain ATCC 43589 / DSM 3109 / JCM 10099 / NBRC 100826 / MSB8), this protein is 8-oxoguanine DNA glycosylase/AP lyase.